We begin with the raw amino-acid sequence, 229 residues long: Dihydrofolate reductase (229 aa).

A DHFR domain is found at Ser-11 to Leu-227. NADP(+) contacts are provided by residues Ala-17 and Gly-23–Gly-29. Glu-37 to Ala-42 is a binding site for substrate. An NADP(+)-binding site is contributed by Arg-64–Thr-66. Arg-80 is a substrate binding site. NADP(+)-binding positions include Ser-86–Lys-88 and Gly-127–Ser-134.

It belongs to the dihydrofolate reductase family. Monomer.

It carries out the reaction (6S)-5,6,7,8-tetrahydrofolate + NADP(+) = 7,8-dihydrofolate + NADPH + H(+). The protein operates within cofactor biosynthesis; tetrahydrofolate biosynthesis; 5,6,7,8-tetrahydrofolate from 7,8-dihydrofolate: step 1/1. In terms of biological role, key enzyme in folate metabolism. Catalyzes an essential reaction for de novo glycine and purine synthesis, and for DNA precursor synthesis. This Cryptococcus neoformans var. neoformans serotype D (strain JEC21 / ATCC MYA-565) (Filobasidiella neoformans) protein is Dihydrofolate reductase (DFR1).